The sequence spans 503 residues: Angiopoietin-4 (503 aa).

The signal sequence occupies residues 1 to 24; that stretch reads MLSQLAMLQGSLLLVVATMSVAQQ. A coiled-coil region spans residues 84–238; the sequence is TQQVKQLEQA…RQSAALTNIE (155 aa). 9 N-linked (GlcNAc...) asparagine glycosylation sites follow: Asn96, Asn126, Asn140, Asn158, Asn247, Asn274, Asn311, Asn337, and Asn427. In terms of domain architecture, Fibrinogen C-terminal spans 282-502; that stretch reads MAGEQVFQDC…ASRMMIRPLD (221 aa). An intrachain disulfide couples Cys291 to Cys320. Cys444 and Cys457 are disulfide-bonded.

In terms of assembly, homodimer; disulfide-linked. Interacts with TEK/TIE2. Highly expressed in the lung with much lower levels found in other tissues.

Its subcellular location is the secreted. In terms of biological role, binds to TEK/TIE2, modulating ANGPT1 signaling. Can induce tyrosine phosphorylation of TEK/TIE2. Promotes endothelial cell survival, migration and angiogenesis. The polypeptide is Angiopoietin-4 (ANGPT4) (Homo sapiens (Human)).